The sequence spans 290 residues: ATP synthase gamma chain (290 aa).

The protein belongs to the ATPase gamma chain family. As to quaternary structure, F-type ATPases have 2 components, CF(1) - the catalytic core - and CF(0) - the membrane proton channel. CF(1) has five subunits: alpha(3), beta(3), gamma(1), delta(1), epsilon(1). CF(0) has four main subunits: a, b, b' and c.

It localises to the cellular chromatophore membrane. In terms of biological role, produces ATP from ADP in the presence of a proton gradient across the membrane. The gamma chain is believed to be important in regulating ATPase activity and the flow of protons through the CF(0) complex. In Rhodobacter capsulatus (Rhodopseudomonas capsulata), this protein is ATP synthase gamma chain.